Here is a 265-residue protein sequence, read N- to C-terminus: Insulin-like growth factor-binding protein 2-B (265 aa).

Positions 1–17 are cleaved as a signal peptide; that stretch reads MSLALLCSLLLVHGSLG. The 81-residue stretch at 19-99 folds into the IGFBP N-terminal domain; that stretch reads IVFRCPSCTA…IQGLGRCENK (81 aa). Intrachain disulfides connect Cys23-Cys49, Cys26-Cys51, Cys34-Cys52, Cys41-Cys55, Cys63-Cys76, and Cys70-Cys96. Residues 107–122 are compositionally biased toward polar residues; the sequence is TNQESAAHSGEVNGTR. Disordered regions lie at residues 107–128 and 144–170; these read TNQESAAHSGEVNGTRSPPMKK and HHNNKRTRMYNTQDDPKTPHPKQSQCQ. Positions 166-248 constitute a Thyroglobulin type-1 domain; the sequence is QSQCQQELDK…SDKVRGDPNC (83 aa). Intrachain disulfides connect Cys169–Cys203, Cys214–Cys225, and Cys227–Cys248. Residues 238–265 form a disordered region; it reads SSDKVRGDPNCSQYYGGPELEPPTAQQK. Positions 243 to 245 match the Cell attachment site motif; that stretch reads RGD.

Interacts with igf2. Interacts with igf1. In terms of tissue distribution, in early embryos, expressed at a low level in most tissues with expression becoming abundant in the liver by 96 hours post-fertilization (hpf). The expression pattern in adults exhibits sexual dimorphism; in adult males expression is limited exclusively to the liver whereas in adult females expression is observed in the liver and other tissues including the gut, kidney, ovary and muscle.

The protein localises to the secreted. Its function is as follows. IGF-binding proteins prolong the half-life of the IGFs and have been shown to either inhibit or stimulate the growth promoting effects of the IGFs on cell culture. They alter the interaction of IGFs with their cell surface receptors. The chain is Insulin-like growth factor-binding protein 2-B from Danio rerio (Zebrafish).